The following is a 76-amino-acid chain: Large ribosomal subunit protein bL28 (76 aa).

The protein belongs to the bacterial ribosomal protein bL28 family.

The sequence is that of Large ribosomal subunit protein bL28 from Opitutus terrae (strain DSM 11246 / JCM 15787 / PB90-1).